Consider the following 388-residue polypeptide: Lipid-A-disaccharide synthase (388 aa).

This sequence belongs to the LpxB family.

The catalysed reaction is a lipid X + a UDP-2-N,3-O-bis[(3R)-3-hydroxyacyl]-alpha-D-glucosamine = a lipid A disaccharide + UDP + H(+). Its pathway is bacterial outer membrane biogenesis; LPS lipid A biosynthesis. Functionally, condensation of UDP-2,3-diacylglucosamine and 2,3-diacylglucosamine-1-phosphate to form lipid A disaccharide, a precursor of lipid A, a phosphorylated glycolipid that anchors the lipopolysaccharide to the outer membrane of the cell. This is Lipid-A-disaccharide synthase from Sulfurihydrogenibium sp. (strain YO3AOP1).